Consider the following 514-residue polypeptide: Na(+)/H(+) antiporter NhaB (514 aa).

The next 12 helical transmembrane spans lie at 23 to 43 (LALIAFLIANPLIFFINPFVA), 63 to 83 (PLLPGGLLAIEAVIIGMTSAA), 97 to 117 (LLLMFMVAGIYFMKQLLLFIF), 120 to 140 (LLLSIRSKMLLSLAFCMAAAF), 144 to 164 (FLDALTVVAVVISVAVGFYGI), 202 to 222 (LMMHAGVGTALGGVMTMVGEP), 238 to 258 (FFLRMSPVTVPVLICGLFTCV), 303 to 323 (AIIGVWLVTALALHLAEVGLI), 357 to 377 (LTVFFSIVAVIIDQHLFAPII), 391 to 411 (LFYLFNGLLSSISDNVFVGTI), 447 to 467 (ATPNGQAAFLFLLTSALAPLI), and 475 to 495 (VWMALPYTLVLTLVGLLCVEF).

The protein belongs to the NhaB Na(+)/H(+) (TC 2.A.34) antiporter family.

It localises to the cell inner membrane. The catalysed reaction is 2 Na(+)(in) + 3 H(+)(out) = 2 Na(+)(out) + 3 H(+)(in). Its function is as follows. Na(+)/H(+) antiporter that extrudes sodium in exchange for external protons. This is Na(+)/H(+) antiporter NhaB from Citrobacter koseri (strain ATCC BAA-895 / CDC 4225-83 / SGSC4696).